A 185-amino-acid polypeptide reads, in one-letter code: Ribosome-recycling factor (185 aa).

The protein belongs to the RRF family.

It localises to the cytoplasm. Functionally, responsible for the release of ribosomes from messenger RNA at the termination of protein biosynthesis. May increase the efficiency of translation by recycling ribosomes from one round of translation to another. The chain is Ribosome-recycling factor from Actinobacillus pleuropneumoniae serotype 5b (strain L20).